The chain runs to 146 residues: Globin-2B (146 aa).

The 138-residue stretch at 9–146 folds into the Globin domain; the sequence is QLTADVKKDL…KLVGVVQAAL (138 aa). Histidine 101 contributes to the heme b binding site.

Belongs to the globin family. As to quaternary structure, homodimer.

This chain is Globin-2B, found in Anadara trapezia (Sydney cockle).